The chain runs to 234 residues: HTH-type transcriptional regulator SmoD (234 aa).

The HTH gntR-type domain maps to 8–76 (LPMYMQIAEM…QGSGNYIRAV (69 aa)). A DNA-binding region (H-T-H motif) is located at residues 36-55 (ERDMAADLGIAVGTLRKSLA).

The protein resides in the cytoplasm. Functionally, probably regulates expression of genes involved in the sulfoquinovose monooxygenase (sulfo-SMO) pathway (smoABCDEFGHI). The chain is HTH-type transcriptional regulator SmoD from Agrobacterium fabrum (strain C58 / ATCC 33970) (Agrobacterium tumefaciens (strain C58)).